Here is a 429-residue protein sequence, read N- to C-terminus: Adenylosuccinate synthetase (429 aa).

Residues 12 to 18 and 40 to 42 each bind GTP; these read GDEGKGK and GHT. Aspartate 13 functions as the Proton acceptor in the catalytic mechanism. Mg(2+) is bound by residues aspartate 13 and glycine 40. IMP-binding positions include 13-16, 38-41, threonine 129, arginine 143, glutamine 224, threonine 239, and arginine 303; these read DEGK and NAGH. Histidine 41 serves as the catalytic Proton donor. Position 299-305 (299-305) interacts with substrate; that stretch reads VTTGRAR. GTP-binding positions include arginine 305, 331–333, and 413–415; these read KLD and GVG.

This sequence belongs to the adenylosuccinate synthetase family. As to quaternary structure, homodimer. The cofactor is Mg(2+).

Its subcellular location is the cytoplasm. The enzyme catalyses IMP + L-aspartate + GTP = N(6)-(1,2-dicarboxyethyl)-AMP + GDP + phosphate + 2 H(+). Its pathway is purine metabolism; AMP biosynthesis via de novo pathway; AMP from IMP: step 1/2. In terms of biological role, plays an important role in the de novo pathway of purine nucleotide biosynthesis. Catalyzes the first committed step in the biosynthesis of AMP from IMP. This Rhodococcus erythropolis (strain PR4 / NBRC 100887) protein is Adenylosuccinate synthetase.